The following is a 113-amino-acid chain: MTMEAKAILRTARISPQKARLVADQVRGLSAERAVNLLKFSDKKAAHLIKKVVESAIANAENNQGADVDELKVKTIMVDEGPSLKRFMARAKGRGTRILKRTSHITVVVGAAK.

Belongs to the universal ribosomal protein uL22 family. Part of the 50S ribosomal subunit.

In terms of biological role, this protein binds specifically to 23S rRNA; its binding is stimulated by other ribosomal proteins, e.g. L4, L17, and L20. It is important during the early stages of 50S assembly. It makes multiple contacts with different domains of the 23S rRNA in the assembled 50S subunit and ribosome. The globular domain of the protein is located near the polypeptide exit tunnel on the outside of the subunit, while an extended beta-hairpin is found that lines the wall of the exit tunnel in the center of the 70S ribosome. This chain is Large ribosomal subunit protein uL22, found in Xanthomonas axonopodis pv. citri (strain 306).